Here is a 180-residue protein sequence, read N- to C-terminus: UPF0227 protein Shew_1627 (180 aa).

The protein belongs to the UPF0227 family.

In Shewanella loihica (strain ATCC BAA-1088 / PV-4), this protein is UPF0227 protein Shew_1627.